Consider the following 150-residue polypeptide: Photosystem II extrinsic protein V (150 aa).

Residues 1–20 form the signal peptide; the sequence is MIRVIMLLVLVWMTPMISWA. Heme c is bound by residues cysteine 50, cysteine 53, histidine 54, and histidine 105.

Belongs to the cytochrome c family. PsbV subfamily. PSII is composed of 1 copy each of membrane proteins PsbA, PsbB, PsbC, PsbD, PsbE, PsbF, PsbH, PsbI, PsbJ, PsbK, PsbL, PsbM, PsbT, PsbY, PsbZ, Psb30/Ycf12, at least 3 peripheral proteins of the oxygen-evolving complex and a large number of cofactors. It forms dimeric complexes. The extrinsic subunits in red algae are PsbO (OEC33), PsbQ', cytochrome c-550 and PsbU. Requires heme c as cofactor.

It is found in the plastid. Its subcellular location is the chloroplast thylakoid membrane. Functionally, one of the extrinsic, lumenal subunits of photosystem II (PSII). PSII is a light-driven water plastoquinone oxidoreductase, using light energy to abstract electrons from H(2)O, generating a proton gradient subsequently used for ATP formation. The extrinsic proteins stabilize the structure of photosystem II oxygen-evolving complex (OEC), the ion environment of oxygen evolution and protect the OEC against heat-induced inactivation. This Cyanidioschyzon merolae (strain NIES-3377 / 10D) (Unicellular red alga) protein is Photosystem II extrinsic protein V.